We begin with the raw amino-acid sequence, 89 residues long: Small ribosomal subunit protein uS15 (89 aa).

Belongs to the universal ribosomal protein uS15 family. As to quaternary structure, part of the 30S ribosomal subunit. Forms a bridge to the 50S subunit in the 70S ribosome, contacting the 23S rRNA.

Its function is as follows. One of the primary rRNA binding proteins, it binds directly to 16S rRNA where it helps nucleate assembly of the platform of the 30S subunit by binding and bridging several RNA helices of the 16S rRNA. Forms an intersubunit bridge (bridge B4) with the 23S rRNA of the 50S subunit in the ribosome. The protein is Small ribosomal subunit protein uS15 of Desulfosudis oleivorans (strain DSM 6200 / JCM 39069 / Hxd3) (Desulfococcus oleovorans).